Here is a 239-residue protein sequence, read N- to C-terminus: Ribonuclease PH (239 aa).

Phosphate is bound by residues Arg88 and 126-128 (GTR).

It belongs to the RNase PH family. As to quaternary structure, homohexameric ring arranged as a trimer of dimers.

It catalyses the reaction tRNA(n+1) + phosphate = tRNA(n) + a ribonucleoside 5'-diphosphate. Functionally, phosphorolytic 3'-5' exoribonuclease that plays an important role in tRNA 3'-end maturation. Removes nucleotide residues following the 3'-CCA terminus of tRNAs; can also add nucleotides to the ends of RNA molecules by using nucleoside diphosphates as substrates, but this may not be physiologically important. Probably plays a role in initiation of 16S rRNA degradation (leading to ribosome degradation) during starvation. The polypeptide is Ribonuclease PH (Coxiella burnetii (strain Dugway 5J108-111)).